Reading from the N-terminus, the 253-residue chain is uncharacterized protein (253 aa).

Residues 30–236 form the BPL/LPL catalytic domain; it reads AQGRQVAQLW…AVDDDAALMA (207 aa).

This is an uncharacterized protein from Cupriavidus necator (strain ATCC 17699 / DSM 428 / KCTC 22496 / NCIMB 10442 / H16 / Stanier 337) (Ralstonia eutropha).